A 346-amino-acid polypeptide reads, in one-letter code: Biotin synthase (346 aa).

Residues 38–256 (RQVQVSTLLS…IAVARIMMPT (219 aa)) enclose the Radical SAM core domain. Residues Cys53, Cys57, and Cys60 each coordinate [4Fe-4S] cluster. [2Fe-2S] cluster contacts are provided by Cys97, Cys128, Cys188, and Arg260.

This sequence belongs to the radical SAM superfamily. Biotin synthase family. In terms of assembly, homodimer. The cofactor is [4Fe-4S] cluster. It depends on [2Fe-2S] cluster as a cofactor.

It carries out the reaction (4R,5S)-dethiobiotin + (sulfur carrier)-SH + 2 reduced [2Fe-2S]-[ferredoxin] + 2 S-adenosyl-L-methionine = (sulfur carrier)-H + biotin + 2 5'-deoxyadenosine + 2 L-methionine + 2 oxidized [2Fe-2S]-[ferredoxin]. It functions in the pathway cofactor biosynthesis; biotin biosynthesis; biotin from 7,8-diaminononanoate: step 2/2. In terms of biological role, catalyzes the conversion of dethiobiotin (DTB) to biotin by the insertion of a sulfur atom into dethiobiotin via a radical-based mechanism. In Shigella flexneri serotype 5b (strain 8401), this protein is Biotin synthase.